The following is a 194-amino-acid chain: Calcium channel flower (194 aa).

Transmembrane regions (helical) follow at residues 35–55 (LGIV…FSII), 66–88 (IIQM…VCFE), and 113–133 (AIPP…GLIF).

The protein belongs to the calcium channel flower family. Homomultimer. Associates with the dally/ magu complex.

The protein localises to the cytoplasmic vesicle. It localises to the secretory vesicle. It is found in the synaptic vesicle membrane. The protein resides in the presynaptic cell membrane. Its subcellular location is the endosome. With respect to regulation, channel activity is inhibited by La(3+), which reduces Ca(2+) influx and thus inhibits it's function in promoting activity-dependent bulk endocytosis (ADBE) in response to high stimuli. Transmembrane protein which mediates synaptic endocytosis, fitness-based cell culling, neuronal culling, morphogen gradient scaling, and calcium transport. Regulates synaptic endocytosis and hence couples exo- with endocytosis. Controls two major modes of synaptic vesicle (SV) endocytosis in the synaptic boutons of neuromuscular junctions (NMJs); Ca(2+) channel-independent Clathrin-mediated endocytosis (CME) in response to mild stimulation, and Ca(2+) channel-dependent activity-dependent bulk endocytosis (ADBE) in response to strong stimulation. Functions in ADBE and subsequent SV reformation from bulk endosomes by initiating Ca(2+) channel-dependent phosphatidylinositol 4,5-bisphosphate (PtdIns(4,5)P2) compartmentalization in synaptic boutons. There it acts at the periactive zone to provide the low Ca(2+) levels required to initiate Calcineurin activation and upregulate PtdIns(4,5)P2. Conversely PtdIns(4,5)P2 enhances fwe Ca(2+) channel-activity, establishing a positive feedback loop that induces PtdIns(4,5)P2 microdomain at the periactive zone. These microdomains trigger bulk membrane invagination (i.e. ADBE) by triggering actin polymerization while also promoting localization of fwe to bulk endosomes, thereby removing the ADBE trigger to reduce endocytosis and prevent excess membrane uptake. PtdIns(4,5)P2 then promotes SV reformation from the bulk endosomes, to coordinate ADBE and subsequent SV reformation. Different combinations of the flower isoforms at the cell membrane are also required for the identification and elimination of suboptimal or supernumerary cells during development, regeneration, and adulthood. Required for the recognition and elimination of unfit cells in the developing wing during cell competition. In the developing pupal retina, mediates the elimination of unwanted postmitotic neurons, including supernumerary photoreceptor neurons that form at the periphery of the retina and are contained within incomplete ommatidia units. Also required for efficient elimination and replacement of old neurons by newly generated neurons during regeneration in the adult brain following mechanical injury. Downstream of the flower fitness fingerprints, cells identified as unwanted or unfit are eliminated via apoptosis through the expression of ahuizotl (azot). However, the cells marked for elimination by the flower isoforms only undergo apoptosis if additional thresholds are met; (1) their neighboring fit/healthy cells express different levels of the fwe isoforms, and (2) the levels of the protective signal SPARC expressed by the loser or unwanted cells are unable to inhibit caspase activation. These additional thresholds for flower-mediated apoptosis, allows useful cells to recover from transient and limited stress before they are unnecessarily eliminated. Functions with dally and magu in a mechanism of scaling, which utilises apoptosis to ensure that the dpp morphogen gradient, which mediates organ growth, remains proportional to the size of the growing wing. In this mechanism, fwe represses dally- and Magu-dependent activity in expanding the gradient, and dally/Magu inhibits fwe-dependent apoptosis to keep cell death rate low. When the levels of these different proteins are optimally regulated the gradient correctly scales with organ growth but when this fails, fwe-mediated apoptosis is activated to trim the developing tissue to match the correct size of the gradient. The chain is Calcium channel flower from Drosophila yakuba (Fruit fly).